The chain runs to 297 residues: Light-independent protochlorophyllide reductase iron-sulfur ATP-binding protein (297 aa).

ATP-binding positions include 41-46 and Lys70; that span reads GIGKST. Ser45 lines the Mg(2+) pocket. [4Fe-4S] cluster contacts are provided by Cys126 and Cys160. ATP contacts are provided by residues 211 to 212 and 235 to 237; these read NR and PDL.

Belongs to the NifH/BchL/ChlL family. As to quaternary structure, homodimer. Protochlorophyllide reductase is composed of three subunits; BchL, BchN and BchB. The cofactor is [4Fe-4S] cluster.

It catalyses the reaction chlorophyllide a + oxidized 2[4Fe-4S]-[ferredoxin] + 2 ADP + 2 phosphate = protochlorophyllide a + reduced 2[4Fe-4S]-[ferredoxin] + 2 ATP + 2 H2O. The protein operates within porphyrin-containing compound metabolism; bacteriochlorophyll biosynthesis (light-independent). Component of the dark-operative protochlorophyllide reductase (DPOR) that uses Mg-ATP and reduced ferredoxin to reduce ring D of protochlorophyllide (Pchlide) to form chlorophyllide a (Chlide). This reaction is light-independent. The L component serves as a unique electron donor to the NB-component of the complex, and binds Mg-ATP. The sequence is that of Light-independent protochlorophyllide reductase iron-sulfur ATP-binding protein from Cereibacter sphaeroides (strain ATCC 17025 / ATH 2.4.3) (Rhodobacter sphaeroides).